A 420-amino-acid polypeptide reads, in one-letter code: Argininosuccinate synthase (420 aa).

Position 23–31 (23–31 (AYSGGLDTS)) interacts with ATP. Tyr102 contributes to the L-citrulline binding site. Residue Gly132 participates in ATP binding. L-aspartate-binding residues include Thr134, Asn138, and Asp139. L-citrulline is bound at residue Asn138. The L-citrulline site is built by Arg142, Ser190, Glu274, and Tyr286.

This sequence belongs to the argininosuccinate synthase family. Type 1 subfamily. Homotetramer.

It is found in the cytoplasm. It catalyses the reaction L-citrulline + L-aspartate + ATP = 2-(N(omega)-L-arginino)succinate + AMP + diphosphate + H(+). It participates in amino-acid biosynthesis; L-arginine biosynthesis; L-arginine from L-ornithine and carbamoyl phosphate: step 2/3. The sequence is that of Argininosuccinate synthase from Renibacterium salmoninarum (strain ATCC 33209 / DSM 20767 / JCM 11484 / NBRC 15589 / NCIMB 2235).